The following is a 168-amino-acid chain: uncharacterized protein (168 aa).

2 disordered regions span residues 1–81 (MSSA…GRSW) and 119–150 (RDLS…STVA). Residues 7–34 (SRTSRSKATGASSSSISSSIRASPSSSS) are compositionally biased toward low complexity. Residues 43–67 (TRRRRRRTGRRSTKRSIISPRRRRM) are compositionally biased toward basic residues. Residues 123–146 (ESASTGSENLSRKASNQSQSQGRL) are compositionally biased toward polar residues.

This is an uncharacterized protein from Human adenovirus C serotype 2 (HAdV-2).